The following is a 446-amino-acid chain: WD repeat domain phosphoinositide-interacting protein 1 (446 aa).

The Nuclear receptor interaction motif lies at 131–136 (LLKTVL). One copy of the WD 1 repeat lies at 184-224 (AHEGTLAAITFNSSGSKLASASEKGTVIRVFSVPEGQKLYE). The L/FRRG motif motif lies at 225-228 (FRRG). WD repeat units lie at residues 230-269 (KRYVTISSLVFSMDSQFLCASSNTETVHIFKMEHLTDSRP) and 312-351 (SGQKNICTLSTIQKLPRLLVASSDGHLYIYNLDPQDGGEC). Residues 386-406 (ARPSTSAASTVPGYSEDGGAL) are disordered.

Belongs to the WD repeat PROPPIN family. In terms of assembly, interacts with androgen receptor (AR) and the estrogen receptors ESR1 and ESR2. Interacts with WIPI2. Interacts with WDR45. Interacts with ATG16L1. May interact with NUDC.

It is found in the golgi apparatus. The protein localises to the trans-Golgi network. Its subcellular location is the endosome. The protein resides in the cytoplasmic vesicle. It localises to the clathrin-coated vesicle. It is found in the preautophagosomal structure membrane. The protein localises to the cytoplasm. Its subcellular location is the cytoskeleton. In terms of biological role, component of the autophagy machinery that controls the major intracellular degradation process by which cytoplasmic materials are packaged into autophagosomes and delivered to lysosomes for degradation. Plays an important role in starvation- and calcium-mediated autophagy, as well as in mitophagy. Functions downstream of the ULK1 and PI3-kinases that produce phosphatidylinositol 3-phosphate (PtdIns3P) on membranes of the endoplasmic reticulum once activated. Binds phosphatidylinositol 3-phosphate (PtdIns3P), and maybe other phosphoinositides including PtdIns3,5P2 and PtdIns5P, and is recruited to phagophore assembly sites at the endoplasmic reticulum membranes. There, it assists WIPI2 in the recruitment of ATG12-ATG5-ATG16L1, a complex that directly controls the elongation of the nascent autophagosomal membrane. Together with WDR45/WIPI4, promotes ATG2 (ATG2A or ATG2B)-mediated lipid transfer by enhancing ATG2-association with phosphatidylinositol 3-monophosphate (PI3P)-containing membranes. Involved in xenophagy of Staphylococcus aureus. Invading S.aureus cells become entrapped in autophagosome-like WIPI1 positive vesicles targeted for lysosomal degradation. Also plays a distinct role in controlling the transcription of melanogenic enzymes and melanosome maturation, a process that is distinct from starvation-induced autophagy. May also regulate the trafficking of proteins involved in the mannose-6-phosphate receptor (MPR) recycling pathway. The chain is WD repeat domain phosphoinositide-interacting protein 1 (Wipi1) from Mus musculus (Mouse).